The sequence spans 308 residues: GATA transcription factor 9 (308 aa).

A disordered region spans residues 34–57 (DDGLNTLPDSSTLSTGTLTDSSNS). Residues 39-57 (TLPDSSTLSTGTLTDSSNS) show a composition bias toward low complexity. Positions 142 to 149 (KARSKRSR) match the Nuclear localization signal motif. A GATA-type zinc finger spans residues 193–247 (SGGGRRCLHCATEKTPQWRTGPMGPKTLCNACGVRYKSGRLVPEYRPASSPTFVM).

The protein belongs to the type IV zinc-finger family. Class A subfamily.

Its subcellular location is the nucleus. Functionally, transcriptional activator that specifically binds 5'-GATA-3' or 5'-GAT-3' motifs within gene promoters. May be involved in the regulation of some light-responsive genes. This is GATA transcription factor 9 (GATA9) from Arabidopsis thaliana (Mouse-ear cress).